The primary structure comprises 348 residues: Outer membrane protein assembly factor BamC (348 aa).

An N-terminal signal peptide occupies residues 1 to 24 (MATLLQTSKVMKVAGLSLVVFLAA). Cys25 carries the N-palmitoyl cysteine lipid modification. Cys25 carries the S-diacylglycerol cysteine lipid modification. The segment at 211–230 (SQQQEEAGQNNAKDSGALTV) is disordered.

This sequence belongs to the BamC family. Part of the Bam complex, which is composed of the outer membrane protein BamA, and four lipoproteins BamB, BamC, BamD and BamE.

The protein resides in the cell outer membrane. In terms of biological role, part of the outer membrane protein assembly complex, which is involved in assembly and insertion of beta-barrel proteins into the outer membrane. The protein is Outer membrane protein assembly factor BamC of Xenorhabdus nematophila (strain ATCC 19061 / DSM 3370 / CCUG 14189 / LMG 1036 / NCIMB 9965 / AN6).